Consider the following 347-residue polypeptide: Probable zinc transporter 8 (347 aa).

A signal peptide spans M1 to S27. Topologically, residues T28–K51 are extracellular. A helical membrane pass occupies residues I52–S72. The Cytoplasmic segment spans residues R73–K83. A helical membrane pass occupies residues I84 to V104. Over L105–K124 the chain is Extracellular. A helical transmembrane segment spans residues F125–I145. Residues A146–R192 are Cytoplasmic-facing. A helical transmembrane segment spans residues V193–L213. At G214–G224 the chain is on the extracellular side. Residues L225–L245 form a helical membrane-spanning segment. Over Q246 to K254 the chain is Cytoplasmic. Residues F255–L275 traverse the membrane as a helical segment. Topologically, residues S276–A286 are extracellular. Residues L287 to V307 form a helical membrane-spanning segment. At D308–Q326 the chain is on the cytoplasmic side. The helical transmembrane segment at L327–A347 threads the bilayer.

The protein belongs to the ZIP transporter (TC 2.A.5) family.

Its subcellular location is the cell membrane. Functionally, probably mediates zinc uptake from the rhizosphere. The protein is Probable zinc transporter 8 (ZIP8) of Arabidopsis thaliana (Mouse-ear cress).